The following is a 159-amino-acid chain: Large ribosomal subunit protein mL50 (159 aa).

Belongs to the mitochondrion-specific ribosomal protein mL50 family. As to quaternary structure, component of the mitochondrial ribosome large subunit (39S) which comprises a 16S rRNA and about 50 distinct proteins.

The protein localises to the mitochondrion. The sequence is that of Large ribosomal subunit protein mL50 (Mrpl50) from Mus musculus (Mouse).